Consider the following 347-residue polypeptide: MREQSSYKDAGVDIDKANLFISRIIPLIKMTSRKEVMKGIGGFGGLFHLDLKKIKDPVLVAATDGVGTKIKIAQMMNKHDTVGIDLVAMSVNDIIVQGAEPIFFLDYIAIGQMDVERNVKLIEGIVKGCQEAGCALIGGETAEMPGIYSENEYDLAGFCIGVVENGRIIDGSDIRVGDRVIGIASNGIHSNGYSLVRKVIFDKAKLNVDDTIEGIENSIGEELLRPTRIYVKPVLNLMKSFNIKGIVHITGGGFVDNIPRIVPNQCCTVIRMNSWQIPPIFSIIQELGDIDQMEMVRVFNMGIGMILIVSEKETDDIVERLNMLGEKAYIIGSIEKADGEKSAVSFT.

The protein belongs to the AIR synthase family.

Its subcellular location is the cytoplasm. The catalysed reaction is 2-formamido-N(1)-(5-O-phospho-beta-D-ribosyl)acetamidine + ATP = 5-amino-1-(5-phospho-beta-D-ribosyl)imidazole + ADP + phosphate + H(+). The protein operates within purine metabolism; IMP biosynthesis via de novo pathway; 5-amino-1-(5-phospho-D-ribosyl)imidazole from N(2)-formyl-N(1)-(5-phospho-D-ribosyl)glycinamide: step 2/2. The chain is Phosphoribosylformylglycinamidine cyclo-ligase from Syntrophus aciditrophicus (strain SB).